A 979-amino-acid chain; its full sequence is Pheromone-regulated membrane protein 10 (979 aa).

5 disordered regions span residues 1–279, 295–318, 337–411, 432–451, and 491–528; these read MGKS…FFSK, LRNV…EVDG, YSSL…PQRV, FSTA…PLLD, and ATKH…LPKF. Residues 15-26 are compositionally biased toward basic and acidic residues; the sequence is GGKDARSPETRS. The segment covering 29-38 has biased composition (low complexity); that stretch reads SRSSTDNRSS. Residues 54-68 show a composition bias toward acidic residues; sequence LDLEEGVDDDADFDW. Residues 77–86 show a composition bias toward polar residues; that stretch reads DAQSLDNPFN. Positions 105 to 115 are enriched in basic and acidic residues; sequence AIERDAVDTIR. Over residues 122 to 135 the composition is skewed to acidic residues; that stretch reads EEPDSASDGEDVGM. Basic and acidic residues-rich tracts occupy residues 138-148 and 158-175; these read EYQRKRERLVD and SPRR…HTET. Over residues 192–213 the composition is skewed to polar residues; that stretch reads EAGTGTNENGEASSSGMKSSIN. A compositionally biased stretch (basic and acidic residues) spans 253 to 263; sequence GAEKGMKSMKD. Residues 360–372 show a composition bias toward low complexity; it reads SPSTPSSSPGPES. Residues 379 to 395 show a composition bias toward acidic residues; the sequence is DDYDFDQVDSDGEDSDL. Positions 503–515 are enriched in polar residues; sequence ASGSNSELPSFKN. Over residues 516–528 the composition is skewed to basic residues; sequence TRPKKNKKHLPKF. 10 helical membrane-spanning segments follow: residues 658–678, 680–700, 710–730, 734–754, 773–793, 809–829, 832–852, 864–884, 886–906, and 946–966; these read WVCV…AFGG, WVNL…QFIV, VFEI…GSIG, ICFG…YIIL, FYAI…AALF, PISP…ISLI, AHWI…VVTY, FTAS…SRVW, GLAV…GVAS, and ITMI…SLIV.

The protein belongs to the ThrE exporter (TC 2.A.79) family.

Its subcellular location is the membrane. The sequence is that of Pheromone-regulated membrane protein 10 from Zygosaccharomyces rouxii (strain ATCC 2623 / CBS 732 / NBRC 1130 / NCYC 568 / NRRL Y-229).